The primary structure comprises 126 residues: MKMILALVVLGLVLVAAEDKYTTKYDNIDVDEILKSDRLFGNYFKCLVDNGKCTPEGRELKKSLPDALKTECSKCSEKQRQNTDKVIRYIIENKPEEWKQLQAKYDPDEIYIKRYRATAEASGIKV.

The signal sequence occupies residues 1–17; it reads MKMILALVVLGLVLVAA.

The protein belongs to the insect A10/OS-D protein family. Specifically expressed in the ejaculatory bulb and seminal fluid.

Its subcellular location is the secreted. Protein component of the posterior mating plug. The chain is Ejaculatory bulb-specific protein 3 from Drosophila melanogaster (Fruit fly).